Consider the following 167-residue polypeptide: Photosystem I assembly protein Ycf3 (167 aa).

TPR repeat units follow at residues 35–68 (AFTYYRDGMSAQSEGEYAEALQNYYEAMRLEIDP), 72–105 (SYILYNIGLIHTSNGEHAKAIEYYLQALERNPSL), and 120–153 (GEQAVEKEDLETSEAWFDQAADYWKQAIALAPNN).

Belongs to the Ycf3 family.

It localises to the plastid. The protein localises to the chloroplast thylakoid membrane. Its function is as follows. Essential for the assembly of the photosystem I (PSI) complex. May act as a chaperone-like factor to guide the assembly of the PSI subunits. The polypeptide is Photosystem I assembly protein Ycf3 (Zygnema circumcarinatum (Green alga)).